We begin with the raw amino-acid sequence, 389 residues long: Globin-like protein 6 (389 aa).

The span at 1 to 15 shows a compositional bias: polar residues; it reads MGNQSTKSTHGTTRV. Disordered stretches follow at residues 1–38, 96–123, and 143–185; these read MGNQ…RSAS, RTSK…SVDS, and TVSS…SSNP. Positions 16-25 are enriched in basic residues; the sequence is SHSKSAHHNS. Positions 196-347 constitute a Globin domain; it reads HLTQPQILFV…VTEQLKEGFQ (152 aa). Heme b is bound by residues H254 and H286. The tract at residues 367–389 is disordered; it reads SSFEISTKTKQSDMKRFHTLDNM. Residues 376–389 are compositionally biased toward basic and acidic residues; that stretch reads KQSDMKRFHTLDNM.

This sequence belongs to the globin family. Expressed in the head and tail neurons and nerve cord.

Functionally, may play a role as physiological sensor for oxygen via redox signaling and/or electron transport. This is Globin-like protein 6 from Caenorhabditis elegans.